The sequence spans 364 residues: Chaperone protein DnaJ (364 aa).

The region spanning 5–71 is the J domain; the sequence is DYYEILGVAK…QKRQAYDQFG (67 aa). The segment at 127 to 205 adopts a CR-type zinc-finger fold; sequence GSTVKIRIPK…CRGQGLVRKQ (79 aa). Zn(2+)-binding residues include cysteine 140, cysteine 143, cysteine 157, cysteine 160, cysteine 179, cysteine 182, cysteine 193, and cysteine 196. CXXCXGXG motif repeat units lie at residues 140–147, 157–164, 179–186, and 193–200; these read CDTCSGIG, CSICSGVG, CGTCSGTG, and CGTCRGQG.

Belongs to the DnaJ family. As to quaternary structure, homodimer. Zn(2+) is required as a cofactor.

The protein localises to the cytoplasm. Participates actively in the response to hyperosmotic and heat shock by preventing the aggregation of stress-denatured proteins and by disaggregating proteins, also in an autonomous, DnaK-independent fashion. Unfolded proteins bind initially to DnaJ; upon interaction with the DnaJ-bound protein, DnaK hydrolyzes its bound ATP, resulting in the formation of a stable complex. GrpE releases ADP from DnaK; ATP binding to DnaK triggers the release of the substrate protein, thus completing the reaction cycle. Several rounds of ATP-dependent interactions between DnaJ, DnaK and GrpE are required for fully efficient folding. Also involved, together with DnaK and GrpE, in the DNA replication of plasmids through activation of initiation proteins. This chain is Chaperone protein DnaJ, found in Ruthia magnifica subsp. Calyptogena magnifica.